A 66-amino-acid polypeptide reads, in one-letter code: Large ribosomal subunit protein bL31 (66 aa).

The Zn(2+) site is built by Cys-16, Cys-18, Cys-36, and Cys-39.

Belongs to the bacterial ribosomal protein bL31 family. Type A subfamily. Part of the 50S ribosomal subunit. Requires Zn(2+) as cofactor.

Its function is as follows. Binds the 23S rRNA. In Desulforamulus reducens (strain ATCC BAA-1160 / DSM 100696 / MI-1) (Desulfotomaculum reducens), this protein is Large ribosomal subunit protein bL31.